Reading from the N-terminus, the 60-residue chain is Large ribosomal subunit protein bL32 (60 aa).

Positions 1-16 are enriched in basic residues; that stretch reads MAVPRRKTSPSRRGMR. The interval 1–60 is disordered; that stretch reads MAVPRRKTSPSRRGMRRSADALKRPTYAEDKDSGELRRPHHLDLKTGMYKGRQVIKKKDA. A compositionally biased stretch (basic and acidic residues) spans 17 to 44; it reads RSADALKRPTYAEDKDSGELRRPHHLDL.

Belongs to the bacterial ribosomal protein bL32 family.

The sequence is that of Large ribosomal subunit protein bL32 from Rhodopseudomonas palustris (strain BisB5).